Reading from the N-terminus, the 691-residue chain is DNA ligase (691 aa).

Residues 41 to 45, 90 to 91, and Glu130 contribute to the NAD(+) site; these read DAEYD and SL. The active-site N6-AMP-lysine intermediate is Lys132. Residues Arg153, Glu190, Lys307, and Lys331 each contribute to the NAD(+) site. Residues Cys425, Cys428, Cys443, and Cys449 each contribute to the Zn(2+) site. The BRCT domain maps to 610 to 691; it reads APQGVLAGKT…MHTLLEGHAR (82 aa).

Belongs to the NAD-dependent DNA ligase family. LigA subfamily. The cofactor is Mg(2+). Requires Mn(2+) as cofactor.

It carries out the reaction NAD(+) + (deoxyribonucleotide)n-3'-hydroxyl + 5'-phospho-(deoxyribonucleotide)m = (deoxyribonucleotide)n+m + AMP + beta-nicotinamide D-nucleotide.. DNA ligase that catalyzes the formation of phosphodiester linkages between 5'-phosphoryl and 3'-hydroxyl groups in double-stranded DNA using NAD as a coenzyme and as the energy source for the reaction. It is essential for DNA replication and repair of damaged DNA. This is DNA ligase from Burkholderia pseudomallei (strain 1106a).